The chain runs to 181 residues: Translation initiation factor IF-3 (181 aa).

The protein belongs to the IF-3 family. In terms of assembly, monomer.

Its subcellular location is the cytoplasm. Functionally, IF-3 binds to the 30S ribosomal subunit and shifts the equilibrium between 70S ribosomes and their 50S and 30S subunits in favor of the free subunits, thus enhancing the availability of 30S subunits on which protein synthesis initiation begins. This chain is Translation initiation factor IF-3, found in Mycoplasma mycoides subsp. mycoides SC (strain CCUG 32753 / NCTC 10114 / PG1).